We begin with the raw amino-acid sequence, 234 residues long: Leucyl/phenylalanyl-tRNA--protein transferase (234 aa).

The protein belongs to the L/F-transferase family.

The protein resides in the cytoplasm. It catalyses the reaction N-terminal L-lysyl-[protein] + L-leucyl-tRNA(Leu) = N-terminal L-leucyl-L-lysyl-[protein] + tRNA(Leu) + H(+). The enzyme catalyses N-terminal L-arginyl-[protein] + L-leucyl-tRNA(Leu) = N-terminal L-leucyl-L-arginyl-[protein] + tRNA(Leu) + H(+). It carries out the reaction L-phenylalanyl-tRNA(Phe) + an N-terminal L-alpha-aminoacyl-[protein] = an N-terminal L-phenylalanyl-L-alpha-aminoacyl-[protein] + tRNA(Phe). Its function is as follows. Functions in the N-end rule pathway of protein degradation where it conjugates Leu, Phe and, less efficiently, Met from aminoacyl-tRNAs to the N-termini of proteins containing an N-terminal arginine or lysine. The sequence is that of Leucyl/phenylalanyl-tRNA--protein transferase from Salmonella arizonae (strain ATCC BAA-731 / CDC346-86 / RSK2980).